Reading from the N-terminus, the 88-residue chain is Putative regulatory protein PCC7424_3427 (88 aa).

Belongs to the RemA family.

This chain is Putative regulatory protein PCC7424_3427, found in Gloeothece citriformis (strain PCC 7424) (Cyanothece sp. (strain PCC 7424)).